A 603-amino-acid polypeptide reads, in one-letter code: Aspartate--tRNA(Asp/Asn) ligase (603 aa).

Glutamate 172 serves as a coordination point for L-aspartate. An aspartate region spans residues 196–199 (QLFK). Arginine 218 contacts L-aspartate. Residues 218–220 (RDE) and glutamine 227 each bind ATP. Histidine 457 is an L-aspartate binding site. ATP is bound at residue glutamate 491. Arginine 498 serves as a coordination point for L-aspartate. Residue 543–546 (GLDR) coordinates ATP.

This sequence belongs to the class-II aminoacyl-tRNA synthetase family. Type 1 subfamily. Homodimer.

It is found in the cytoplasm. It catalyses the reaction tRNA(Asx) + L-aspartate + ATP = L-aspartyl-tRNA(Asx) + AMP + diphosphate. Aspartyl-tRNA synthetase with relaxed tRNA specificity since it is able to aspartylate not only its cognate tRNA(Asp) but also tRNA(Asn). Reaction proceeds in two steps: L-aspartate is first activated by ATP to form Asp-AMP and then transferred to the acceptor end of tRNA(Asp/Asn). In Laribacter hongkongensis (strain HLHK9), this protein is Aspartate--tRNA(Asp/Asn) ligase.